The sequence spans 140 residues: Putative pre-16S rRNA nuclease (140 aa).

This sequence belongs to the YqgF nuclease family.

The protein resides in the cytoplasm. Could be a nuclease involved in processing of the 5'-end of pre-16S rRNA. This chain is Putative pre-16S rRNA nuclease, found in Vibrio cholerae serotype O1 (strain ATCC 39541 / Classical Ogawa 395 / O395).